The sequence spans 261 residues: Uridine-cytidine kinase 2 (261 aa).

Residues 1–16 (MAGDSEQTLQNHQQPN) are compositionally biased toward polar residues. The segment at 1-24 (MAGDSEQTLQNHQQPNGGEPFLIG) is disordered. Alanine 2 carries the post-translational modification N-acetylalanine. 27–35 (GGTASGKSS) is an ATP binding site. Residues aspartate 84, tyrosine 112, histidine 117, arginine 166, arginine 176, and glutamine 184 each coordinate substrate. Aspartate 213 is a binding site for ATP. Positions 236 to 261 (RQTNGCLNGYTPSRKRQASESSSRPH) are disordered. At serine 254 the chain carries Phosphoserine.

It belongs to the uridine kinase family. Homotetramer. In terms of tissue distribution, according to PubMed:8812458; testis-specific. According to PubMed:11306702, placenta-specific.

It carries out the reaction uridine + ATP = UMP + ADP + H(+). The catalysed reaction is cytidine + ATP = CMP + ADP + H(+). It functions in the pathway pyrimidine metabolism; CTP biosynthesis via salvage pathway; CTP from cytidine: step 1/3. It participates in pyrimidine metabolism; UMP biosynthesis via salvage pathway; UMP from uridine: step 1/1. Functionally, phosphorylates uridine and cytidine to uridine monophosphate and cytidine monophosphate. Does not phosphorylate deoxyribonucleosides or purine ribonucleosides. Can use ATP or GTP as a phosphate donor. Can also phosphorylate cytidine and uridine nucleoside analogs such as 6-azauridine, 5-fluorouridine, 4-thiouridine, 5-bromouridine, N(4)-acetylcytidine, N(4)-benzoylcytidine, 5-fluorocytidine, 2-thiocytidine, 5-methylcytidine, and N(4)-anisoylcytidine. This is Uridine-cytidine kinase 2 (UCK2) from Homo sapiens (Human).